The sequence spans 148 residues: Large ribosomal subunit protein bL9 (148 aa).

Belongs to the bacterial ribosomal protein bL9 family.

Functionally, binds to the 23S rRNA. This is Large ribosomal subunit protein bL9 from Acinetobacter baumannii (strain AB307-0294).